The following is a 68-amino-acid chain: uncharacterized protein (68 aa).

This is an uncharacterized protein from Dictyostelium discoideum (Social amoeba).